We begin with the raw amino-acid sequence, 33 residues long: Trypsin inhibitor 1 (33 aa).

3 disulfide bridges follow: C1-C17, C8-C21, and C16-C32.

In terms of tissue distribution, expressed in leaves and fruit flesh (at protein level).

Inhibits trypsin (IC(50)=471 nM). The sequence is that of Trypsin inhibitor 1 from Beta vulgaris subsp. vulgaris (Beet).